We begin with the raw amino-acid sequence, 233 residues long: Octanoyltransferase (233 aa).

A BPL/LPL catalytic domain is found at 36–211; sequence DTTPDEIWLV…EFTRQLGYPT (176 aa). Substrate-binding positions include 75–82, 142–144, and 155–157; these read RGGQVTYH, SLG, and GLA. Cys-173 acts as the Acyl-thioester intermediate in catalysis.

The protein belongs to the LipB family.

It localises to the cytoplasm. The enzyme catalyses octanoyl-[ACP] + L-lysyl-[protein] = N(6)-octanoyl-L-lysyl-[protein] + holo-[ACP] + H(+). The protein operates within protein modification; protein lipoylation via endogenous pathway; protein N(6)-(lipoyl)lysine from octanoyl-[acyl-carrier-protein]: step 1/2. Its function is as follows. Catalyzes the transfer of endogenously produced octanoic acid from octanoyl-acyl-carrier-protein onto the lipoyl domains of lipoate-dependent enzymes. Lipoyl-ACP can also act as a substrate although octanoyl-ACP is likely to be the physiological substrate. The chain is Octanoyltransferase from Yersinia pestis bv. Antiqua (strain Antiqua).